The following is a 66-amino-acid chain: Large ribosomal subunit protein uL30 (66 aa).

The protein belongs to the universal ribosomal protein uL30 family. Part of the 50S ribosomal subunit.

The sequence is that of Large ribosomal subunit protein uL30 from Azorhizobium caulinodans (strain ATCC 43989 / DSM 5975 / JCM 20966 / LMG 6465 / NBRC 14845 / NCIMB 13405 / ORS 571).